The following is a 408-amino-acid chain: Multidrug resistance protein MdtG (408 aa).

The next 11 membrane-spanning stretches (helical) occupy residues 16–36 (LIVA…VMPF), 58–78 (IVFS…GGLA), 92–112 (LGMG…QFLI), 115–135 (ALLG…ATQV), 146–166 (TLST…GLLA), 173–193 (PVFF…LFCI), 224–244 (LFVT…ILTL), 256–276 (VAFI…LSAP), 290–310 (ILIT…YVQT), 319–339 (FLLG…LVYN), and 378–398 (AVFL…WNSL).

It belongs to the major facilitator superfamily. DHA1 family. MdtG (TC 2.A.1.2.20) subfamily.

The protein resides in the cell inner membrane. Confers resistance to fosfomycin and deoxycholate. The sequence is that of Multidrug resistance protein MdtG from Escherichia coli O139:H28 (strain E24377A / ETEC).